A 338-amino-acid chain; its full sequence is Anthranilate phosphoribosyltransferase (338 aa).

5-phospho-alpha-D-ribose 1-diphosphate is bound by residues Gly78, 81–82, Thr86, 88–91, 106–114, and Ser118; these read GD, NIST, and KHGNRSVSS. Residue Gly78 coordinates anthranilate. Mg(2+) is bound at residue Ser90. Asn109 lines the anthranilate pocket. Arg164 is an anthranilate binding site. 2 residues coordinate Mg(2+): Asp223 and Glu224.

It belongs to the anthranilate phosphoribosyltransferase family. In terms of assembly, homodimer. The cofactor is Mg(2+).

The catalysed reaction is N-(5-phospho-beta-D-ribosyl)anthranilate + diphosphate = 5-phospho-alpha-D-ribose 1-diphosphate + anthranilate. It functions in the pathway amino-acid biosynthesis; L-tryptophan biosynthesis; L-tryptophan from chorismate: step 2/5. Functionally, catalyzes the transfer of the phosphoribosyl group of 5-phosphorylribose-1-pyrophosphate (PRPP) to anthranilate to yield N-(5'-phosphoribosyl)-anthranilate (PRA). This is Anthranilate phosphoribosyltransferase from Bacillus subtilis (strain 168).